The chain runs to 363 residues: MTSAQRKDDHVRLAIEQHNAHSGRNQFDDVSFVHHALAGIDRPDVSLATSFAGISWQVPIYINAMTGGSEKTGLINRDLATAARETGVPIASGSMNAYIKDPSCADTFRVLRDENPNGFVIANINATTTVDNAQRAIDLIEANALQIHINTAQETPMPEGDRSFASWVPQIEKIAAAVDIPVIVKEVGNGLSRQTILLLADLGVQAADVSGRGGTDFARIENGRRELGDYAFLHGWGQSTAACLLDAQDISLPVLASGGVRHPLDVVRALALGARAVGSSAGFLRTLMDDGVDALITKLTTWLDQLAALQTMLGARTPADLTRCDVLLHGELRDFCADRGIDTRRLAQRSSSIEALQTTGSTR.

6 to 7 (RK) lines the substrate pocket. FMN is bound by residues 64 to 66 (AMT), serine 94, and asparagine 123. Glutamine 153 serves as a coordination point for substrate. Glutamate 154 provides a ligand contact to Mg(2+). FMN-binding positions include lysine 185, serine 210, threonine 215, 259-261 (GVR), and 280-281 (SA).

Belongs to the IPP isomerase type 2 family. In terms of assembly, homooctamer. Dimer of tetramers. The cofactor is Mg(2+). Requires FMN as cofactor. It depends on NADPH as a cofactor.

The protein resides in the cytoplasm. It catalyses the reaction isopentenyl diphosphate = dimethylallyl diphosphate. In terms of biological role, involved in the biosynthesis of isoprenoids. Catalyzes the 1,3-allylic rearrangement of the homoallylic substrate isopentenyl (IPP) to its allylic isomer, dimethylallyl diphosphate (DMAPP). This is Isopentenyl-diphosphate delta-isomerase from Streptomyces sp. (strain CL190).